We begin with the raw amino-acid sequence, 127 residues long: Anti-adapter protein IraD (127 aa).

This sequence belongs to the GpW/Gp25 family. IraD subfamily. In terms of assembly, interacts with RssB.

Its subcellular location is the cytoplasm. Its function is as follows. Inhibits RpoS proteolysis by regulating RssB activity, thereby increasing the stability of the sigma stress factor RpoS during oxidative stress. Its effect on RpoS stability is due to its interaction with RssB, which probably blocks the interaction of RssB with RpoS, and the consequent delivery of the RssB-RpoS complex to the ClpXP protein degradation pathway. This Escherichia coli (strain SMS-3-5 / SECEC) protein is Anti-adapter protein IraD.